The primary structure comprises 943 residues: Isoleucine--tRNA ligase (943 aa).

Positions 58–68 (PYANGKIHIGH) match the 'HIGH' region motif. Glu567 contacts L-isoleucyl-5'-AMP. The short motif at 608-612 (KMSKS) is the 'KMSKS' region element. Residue Lys611 participates in ATP binding. Positions 906, 909, 926, and 929 each coordinate Zn(2+).

It belongs to the class-I aminoacyl-tRNA synthetase family. IleS type 1 subfamily. As to quaternary structure, monomer. Zn(2+) serves as cofactor.

It is found in the cytoplasm. The enzyme catalyses tRNA(Ile) + L-isoleucine + ATP = L-isoleucyl-tRNA(Ile) + AMP + diphosphate. Its function is as follows. Catalyzes the attachment of isoleucine to tRNA(Ile). As IleRS can inadvertently accommodate and process structurally similar amino acids such as valine, to avoid such errors it has two additional distinct tRNA(Ile)-dependent editing activities. One activity is designated as 'pretransfer' editing and involves the hydrolysis of activated Val-AMP. The other activity is designated 'posttransfer' editing and involves deacylation of mischarged Val-tRNA(Ile). The polypeptide is Isoleucine--tRNA ligase (Pseudomonas putida (strain W619)).